Here is a 613-residue protein sequence, read N- to C-terminus: MGAVDTSERLSKLRQLMQQHKVDVYIVPSEDSHQSEYIAPCDARREFISGFSGSAGTAIISLSKAALSTDGRYFNQAAKQLDNNWQLLKGGVEGVPTWQEWTTEEAQGGKAVGVDPSLITASGARKLAETLKKNGSSLVGVRENLVDLVWGKERPARPSEKVRVHPEKYAGKTFQEKVAELRKELESKKKAGFVISMLDEIAWLFNLRGTDIPYNPVFFSYAVITPTTAEIYVEDDKLTPEVKAHLGQDVVVKPYESIFADAQALSTKSQSAGENAAKFLLSNKASWALSLSLGGEGQVEEARSPVADAKAIKNETELEGMRACHIRDGAALTEYFAWLENELINKKTVLDEVDGADKLEQIRSKHDLFAGLSFDTISSTGPNGAVIHYKPEKGSCAIIDPSAIYLCDSGCQYFDGTTDTTRTFHFGVPTEFEKRAFTLVLKGTIGIDMAVFPKGTSGFAIDVLARQHLWREGLDFLHGTGHGVGSYLNVHEGPIGIGTRVQYTEVPIAAGNVISDEPGYYEDGKFGIRIENIVMAREVKTAHNFGDKQWLGFEHVTMTPIGRNLIEPSLLSDAELKWVNDYHAEIWAKTEHFFREDNLTRSWLERETQPISK.

Residues Asp-408, Asp-419, Glu-517, and Glu-531 each coordinate Mn(2+).

This sequence belongs to the peptidase M24B family. Mn(2+) serves as cofactor.

The catalysed reaction is Release of any N-terminal amino acid, including proline, that is linked to proline, even from a dipeptide or tripeptide.. Functionally, catalyzes the removal of a penultimate prolyl residue from the N-termini of peptides. This chain is Probable Xaa-Pro aminopeptidase P (ampp), found in Penicillium rubens (strain ATCC 28089 / DSM 1075 / NRRL 1951 / Wisconsin 54-1255) (Penicillium chrysogenum).